Here is a 162-residue protein sequence, read N- to C-terminus: MSSARFESKILSRAELVAAVAAGRLPRPLVFTNGVFDILHRGHVTYLDQAAQLGATLVVAVNTDESVRRLGKGSDRPLNQVQDRAALLAALGCVDAVTSFHEDTPQELIGELRPDLIVKGGDYDMDTLPETALVKSWGGRAVAIPFDFERSTTALLGKIRQG.

It catalyses the reaction D-glycero-beta-D-manno-heptose 1-phosphate + ATP + H(+) = ADP-D-glycero-beta-D-manno-heptose + diphosphate. It functions in the pathway nucleotide-sugar biosynthesis; ADP-L-glycero-beta-D-manno-heptose biosynthesis; ADP-L-glycero-beta-D-manno-heptose from D-glycero-beta-D-manno-heptose 7-phosphate: step 3/4. The protein operates within bacterial outer membrane biogenesis; LPS core biosynthesis. Its function is as follows. Catalyzes the ADP transfer from ATP to D-glycero-beta-D-manno-heptose 1-phosphate, yielding ADP-D-glycero-beta-D-manno-heptose. Cannot use GTP, UTP, or CTP as substrate. Is not active against the alpha-anomer substrate. Is also able to catalyze the ADP transfer to beta-glucose 1-phosphate in vitro, yielding ADP-beta-glucose. This chain is D-beta-D-heptose 1-phosphate adenylyltransferase, found in Bordetella bronchiseptica (strain ATCC BAA-588 / NCTC 13252 / RB50) (Alcaligenes bronchisepticus).